A 477-amino-acid polypeptide reads, in one-letter code: Homeobox protein Meis2 (477 aa).

Residues 71 to 191 (DALKRDKDAI…KMPIDLVIDE (121 aa)) form a required for interaction with PBX1 region. An MEIS N-terminal domain is found at 110–193 (GGDVCSSDSF…PIDLVIDERD (84 aa)). The segment covering 193-203 (DGSSKSDHEEL) has biased composition (basic and acidic residues). The segment at 193 to 283 (DGSSKSDHEE…KKRQKKRGIF (91 aa)) is disordered. Composition is skewed to polar residues over residues 204–217 (SGSS…NPSS) and 239–251 (GHAS…SSEQ). The segment at residues 276 to 338 (RQKKRGIFPK…NARRRIVQPM (63 aa)) is a DNA-binding region (homeobox; TALE-type). The interval 299–333 (LTHPYPSEEQKKQLAQDTGLTILQVNNWFINARRR) is interaction with DNA. The tract at residues 340 to 477 (DQSNRAGFLL…GGQVMDIHAQ (138 aa)) is transcriptional activation domain.

The protein belongs to the TALE/MEIS homeobox family. Monomer and homodimer. Heterodimer with HOXB13. Isoform 2 interacts with TLX1. Isoform 3 interacts with HOXA13 and PBX1 isoform PBX1b. Isoform 4 interacts with SP1, SP3 and KLF4. Isoform 4 and isoform 5 interact with PBX1 isoform PBX1a; the interaction partially relieves MEIS2 autoinhibition. Isoform 3 also known as MEIS2b is part of a PDX1:PBX1b:Meis2B complex; Meis2B is recruited by PBX1b and can be replaced by isoform 4 in a small fraction of complexes. Can form trimeric complexes including HOXB8 and PBX2 or PBX3. Expressed in various tissues. Expressed at high level in the lymphoid organs of hematopoietic tissues. Also expressed in some regions of the brain, such as the putamen.

The protein localises to the nucleus. It localises to the cytoplasm. It is found in the perinuclear region. Involved in transcriptional regulation. Binds to HOX or PBX proteins to form dimers, or to a DNA-bound dimer of PBX and HOX proteins and thought to have a role in stabilization of the homeoprotein-DNA complex. Isoform 3 is required for the activity of a PDX1:PBX1b:MEIS2b complex in pancreatic acinar cells involved in the transcriptional activation of the ELA1 enhancer; the complex binds to the enhancer B element and cooperates with the transcription factor 1 complex (PTF1) bound to the enhancer A element; MEIS2 is not involved in complex DNA-binding. Probably in complex with PBX1, is involved in transcriptional regulation by KLF4. Isoform 3 and isoform 4 can bind to a EPHA8 promoter sequence containing the DNA motif 5'-CGGTCA-3'; in cooperation with a PBX protein (such as PBX2) is proposed to be involved in the transcriptional activation of EPHA8 in the developing midbrain. May be involved in regulation of myeloid differentiation. Can bind to the DNA sequence 5'-TGACAG-3'in the activator ACT sequence of the D(1A) dopamine receptor (DRD1) promoter and activate DRD1 transcription; isoform 5 cannot activate DRD1 transcription. The polypeptide is Homeobox protein Meis2 (MEIS2) (Homo sapiens (Human)).